Consider the following 210-residue polypeptide: Fibroblast growth factor 8 (210 aa).

A signal peptide spans 1-27 (MRLIPSRLSYLFLHLFAFCYYAQVTIQ).

It belongs to the heparin-binding growth factors family. In terms of assembly, monomer. Homodimer.

The protein resides in the secreted. Its function is as follows. Plays an important role in the regulation of embryonic development, cell proliferation, cell differentiation and cell migration. Required for Kupffer's vesicle ciliogenesis. The polypeptide is Fibroblast growth factor 8 (Danio rerio (Zebrafish)).